We begin with the raw amino-acid sequence, 317 residues long: Aspartate carbamoyltransferase catalytic subunit (317 aa).

Carbamoyl phosphate is bound by residues R66 and T67. Residue K94 coordinates L-aspartate. Carbamoyl phosphate is bound by residues R116, H144, and Q147. The L-aspartate site is built by R177 and R231. G272 and P273 together coordinate carbamoyl phosphate.

The protein belongs to the aspartate/ornithine carbamoyltransferase superfamily. ATCase family. Heterododecamer (2C3:3R2) of six catalytic PyrB chains organized as two trimers (C3), and six regulatory PyrI chains organized as three dimers (R2).

It carries out the reaction carbamoyl phosphate + L-aspartate = N-carbamoyl-L-aspartate + phosphate + H(+). The protein operates within pyrimidine metabolism; UMP biosynthesis via de novo pathway; (S)-dihydroorotate from bicarbonate: step 2/3. Functionally, catalyzes the condensation of carbamoyl phosphate and aspartate to form carbamoyl aspartate and inorganic phosphate, the committed step in the de novo pyrimidine nucleotide biosynthesis pathway. In Rhodopseudomonas palustris (strain ATCC BAA-98 / CGA009), this protein is Aspartate carbamoyltransferase catalytic subunit.